The chain runs to 278 residues: Pantothenate synthetase (278 aa).

Residue 27–34 (MGYLHEGH) participates in ATP binding. The active-site Proton donor is the His-34. (R)-pantoate is bound at residue Gln-58. Gln-58 contributes to the beta-alanine binding site. 144-147 (GQKD) is an ATP binding site. Position 150 (Gln-150) interacts with (R)-pantoate. Residues Val-173 and 181–184 (MSSR) contribute to the ATP site.

It belongs to the pantothenate synthetase family. In terms of assembly, homodimer.

The protein localises to the cytoplasm. The catalysed reaction is (R)-pantoate + beta-alanine + ATP = (R)-pantothenate + AMP + diphosphate + H(+). It functions in the pathway cofactor biosynthesis; (R)-pantothenate biosynthesis; (R)-pantothenate from (R)-pantoate and beta-alanine: step 1/1. Catalyzes the condensation of pantoate with beta-alanine in an ATP-dependent reaction via a pantoyl-adenylate intermediate. The sequence is that of Pantothenate synthetase from Roseiflexus sp. (strain RS-1).